Here is a 630-residue protein sequence, read N- to C-terminus: Eukaryotic translation initiation factor 2-alpha kinase 1 (630 aa).

Positions 1 to 40 (MQGGNSGVRKREEEGDGAGAVAAPPAIDFPAEGPDPEYDE) are disordered. The short motif at 85–104 (LRSRQVFKLLCQTFIKMGLL) is the SIFI-degron element. Residues 167-583 (FEELAILGKG…AIQLLQSELF (417 aa)) enclose the Protein kinase domain. Residues 173–181 (LGKGGYGRV) and K196 contribute to the ATP site. The disordered stretch occupies residues 259-301 (DQEEDREQCGVKNDESSSSSIIFAEPTPEKEKRFGESDTENQN). Residue T285 is modified to Phosphothreonine. Residues 285–294 (TPEKEKRFGE) are compositionally biased toward basic and acidic residues. The HRM 1 repeat unit spans residues 410 to 415 (ACPYVM). The active-site Proton acceptor is the D442. Phosphothreonine; by autocatalysis is present on residues T486 and T488. Residue T493 is modified to Phosphothreonine. One copy of the HRM 2 repeat lies at 552-557 (RCPVQA).

Belongs to the protein kinase superfamily. Ser/Thr protein kinase family. GCN2 subfamily. In terms of assembly, synthesized in an inactive form that binds to the N-terminal domain of CDC37. Has to be associated with a multiprotein complex containing Hsp90, CDC37 and PPP5C for maturation and activation by autophosphorylation. The phosphatase PPP5C modulates this activation. Homodimer; homodimerizes in presence of heme, forming a disulfide-linked inactive homodimer. Interacts with DELE1; binds both to full-length DELE1 and processed form of DELE1 (S-DELE1) in response to stress, leading to activate its protein kinase activity and trigger the integrated stress response (ISR). Activated by autophosphorylation; phosphorylated predominantly on serine and threonine residues, but also on tyrosine residues. Autophosphorylation at Thr-488 is required for kinase activation. The active autophosphorylated form apparently is largely refractory to cellular heme fluctuations. In terms of processing, ubiquitinated and degraded by the SIFI complex once the mitochondrial stress has been resolved, thereby providing stress response silencing. Within the SIFI complex, UBR4 initiates ubiquitin chain that are further elongated or branched by KCMF1.

The enzyme catalyses L-seryl-[protein] + ATP = O-phospho-L-seryl-[protein] + ADP + H(+). The catalysed reaction is L-threonyl-[protein] + ATP = O-phospho-L-threonyl-[protein] + ADP + H(+). Its activity is regulated as follows. In normal conditions, the protein kinase activity is inhibited; inhibition is relieved by various stress conditions. Inhibited by heme: in presence of heme, forms a disulfide-linked inactive homodimer. Heme depletion relieves inhibition and stimulates kinase activity by autophosphorylation. Inhibited by the heme metabolites biliverdin and bilirubin. Induced by oxidative stress generated by arsenite treatment. Binding of nitric oxide (NO) to the heme iron in the N-terminal heme-binding domain activates the kinase activity, while binding of carbon monoxide (CO) suppresses kinase activity. Protein kinase activity is also activated upon binding to DELE1 in response to various stress, triggering the integrated stress response (ISR): activated by full-length DELE1 in response to iron deficiency, while it is activated by the processed form of DELE1 (S-DELE1) in response to mitochondrial stress. In terms of biological role, metabolic-stress sensing protein kinase that phosphorylates the alpha subunit of eukaryotic translation initiation factor 2 (EIF2S1/eIF-2-alpha) in response to various stress conditions. Key activator of the integrated stress response (ISR) required for adaptation to various stress, such as heme deficiency, oxidative stress, osmotic shock, mitochondrial dysfunction and heat shock. EIF2S1/eIF-2-alpha phosphorylation in response to stress converts EIF2S1/eIF-2-alpha in a global protein synthesis inhibitor, leading to a global attenuation of cap-dependent translation, while concomitantly initiating the preferential translation of ISR-specific mRNAs, such as the transcriptional activator ATF4, and hence allowing ATF4-mediated reprogramming. Acts as a key sensor of heme-deficiency: in normal conditions, binds hemin via a cysteine thiolate and histidine nitrogenous coordination, leading to inhibit the protein kinase activity. This binding occurs with moderate affinity, allowing it to sense the heme concentration within the cell: heme depletion relieves inhibition and stimulates kinase activity, activating the ISR. Thanks to this unique heme-sensing capacity, plays a crucial role to shut off protein synthesis during acute heme-deficient conditions. In red blood cells (RBCs), controls hemoglobin synthesis ensuring a coordinated regulation of the synthesis of its heme and globin moieties. It thereby plays an essential protective role for RBC survival in anemias of iron deficiency. Iron deficiency also triggers activation by full-length DELE1. Also activates the ISR in response to mitochondrial dysfunction: HRI/EIF2AK1 protein kinase activity is activated upon binding to the processed form of DELE1 (S-DELE1), thereby promoting the ATF4-mediated reprogramming. Also acts as an activator of mitophagy in response to mitochondrial damage: catalyzes phosphorylation of eIF-2-alpha (EIF2S1) following activation by S-DELE1, thereby promoting mitochondrial localization of EIF2S1, triggering PRKN-independent mitophagy. The sequence is that of Eukaryotic translation initiation factor 2-alpha kinase 1 from Homo sapiens (Human).